The chain runs to 196 residues: SAGA-associated factor 11 homolog (196 aa).

The tract at residues methionine 1–threonine 22 is disordered. Residues cysteine 106 to cysteine 127 form an SGF11-type zinc finger. The disordered stretch occupies residues arginine 141–phenylalanine 196. Serine 172 is modified (phosphoserine). A compositionally biased stretch (low complexity) spans asparagine 180–phenylalanine 196.

The protein belongs to the SGF11 family. As to quaternary structure, component of some SAGA transcription coactivator-HAT complexes, at least composed of Ada2b, not/nonstop, Pcaf/Gcn5, Sgf11 and Spt3. Within the SAGA complex, Sgf11, e(y)2, and not/nonstop form an additional subcomplex of SAGA called the DUB module (deubiquitination module). Interacts directly with not/nonstop. Interacts with the AMEX complex component xmas-2. Interacts with Cbp80; important for promoter recruitment of Sgf11 that is not associated with the DUB module.

Its subcellular location is the nucleus. The protein localises to the nucleoplasm. It is found in the cytoplasm. Component of the transcription regulatory histone acetylation (HAT) complex SAGA, a multiprotein complex that activates transcription by remodeling chromatin and mediating histone acetylation and deubiquitination. Within the SAGA complex, participates in a subcomplex that specifically deubiquitinates histone H2B. The SAGA complex is recruited to specific gene promoters by activators, where it is required for transcription. Required for nuclear receptor-mediated transactivation. Binds independently on SAGA to promoters in an RNA-dependent manner. Binds to mRNA and is essential for total mRNA export from the nucleus. Required to counteract heterochromatin silencing. Controls the development of neuronal connectivity in visual system by being required for accurate axon targeting in the optic lobe. Required for expression of ecdysone-induced genes such as br/broad. The protein is SAGA-associated factor 11 homolog of Drosophila simulans (Fruit fly).